A 653-amino-acid chain; its full sequence is Protein SCARECROW (653 aa).

2 disordered regions span residues 1–69 (MAES…RRVS) and 193–265 (PSSS…AVQT). The segment covering 17-31 (PLRTTSSGSSSSNNR) has biased composition (low complexity). Residues 32–41 (GPPPPPPPPL) are compositionally biased toward pro residues. Over residues 51 to 63 (EMSSNPDYNNSSR) the composition is skewed to polar residues. A compositionally biased stretch (low complexity) spans 209–230 (QISNNPSPPQQQQQHQQQQQQH). Residues 246–265 (STDAPPQPETVTATVPAVQT) show a composition bias toward polar residues. One can recognise a GRAS domain in the interval 281-650 (QKQDEEGLHL…LSLLTASAWT (370 aa)). The tract at residues 288–351 (LHLLTLLLQC…LLNSCLGIYA (64 aa)) is leucine repeat I (LRI). The LxCxE motif motif lies at 295-299 (LQCAE). Residues 370 to 435 (FQVFNGISPL…GGPPHVRLTG (66 aa)) are VHIID. The short motif at 401–405 (VHIID) is the VHIID element. Residues 445-477 (ATGKRLSDFADKLGLPFEFCPLAEKVGNLDTER) form a leucine repeat II (LRII) region. Residues 486-573 (VAVHWLQHSL…QQLLSKEIRN (88 aa)) form a PFYRE region. Positions 576 to 650 (AVGGPSRSGE…LSLLTASAWT (75 aa)) are SAW.

It belongs to the GRAS family. In terms of assembly, interacts with SHR, JKD and MGP. Interacts with SIEL. Interacts with RBR1 through its the LxCxE motif. In terms of tissue distribution, expressed in siliques, leaves and roots. Detected in the initial daughter cell before its asymmetric division and remains expressed only in the endodermal cell layer after the division. Expressed in the endodermis or starch sheath of the seedling hypocotyl, in the leaf bundle sheath cells and the root quiescent center.

It localises to the nucleus. In terms of biological role, transcription factor required for quiescent center cells specification and maintenance of surrounding stem cells, and for the asymmetric cell division involved in radial pattern formation in roots. Essential for cell division but not differentiation of the ground tissue. Also required for normal shoot gravitropism. Regulates the radial organization of the shoot axial organs. Binds to the promoter of MGP, NUC, RLK and SCL3. Restricts SHR movment and sequesters it into the nucleus of the endodermis. The polypeptide is Protein SCARECROW (Arabidopsis thaliana (Mouse-ear cress)).